A 644-amino-acid chain; its full sequence is 1-deoxy-D-xylulose-5-phosphate synthase (644 aa).

Residues H72 and 113-115 (GHA) contribute to the thiamine diphosphate site. A Mg(2+)-binding site is contributed by D144. Thiamine diphosphate contacts are provided by residues 145-146 (GA), N174, Y287, and E370. N174 provides a ligand contact to Mg(2+).

This sequence belongs to the transketolase family. DXPS subfamily. Homodimer. The cofactor is Mg(2+). Thiamine diphosphate serves as cofactor.

The enzyme catalyses D-glyceraldehyde 3-phosphate + pyruvate + H(+) = 1-deoxy-D-xylulose 5-phosphate + CO2. Its pathway is metabolic intermediate biosynthesis; 1-deoxy-D-xylulose 5-phosphate biosynthesis; 1-deoxy-D-xylulose 5-phosphate from D-glyceraldehyde 3-phosphate and pyruvate: step 1/1. Catalyzes the acyloin condensation reaction between C atoms 2 and 3 of pyruvate and glyceraldehyde 3-phosphate to yield 1-deoxy-D-xylulose-5-phosphate (DXP). The sequence is that of 1-deoxy-D-xylulose-5-phosphate synthase from Prochlorococcus marinus (strain MIT 9313).